Here is a 358-residue protein sequence, read N- to C-terminus: Uptake hydrogenase small subunit (358 aa).

The signal sequence occupies residues 1 to 45 (MSDIETFYDVMRRQGITRRSFMKSVRSPQHVLGLGPSFVPKIGEA). 8 residues coordinate [4Fe-4S] cluster: cysteine 62, cysteine 65, cysteine 160, cysteine 194, histidine 232, cysteine 235, cysteine 260, and cysteine 266. Residues cysteine 275, cysteine 294, and cysteine 297 each contribute to the [3Fe-4S] cluster site.

It belongs to the [NiFe]/[NiFeSe] hydrogenase small subunit family. In terms of assembly, heterodimer of a large and a small subunit. [4Fe-4S] cluster is required as a cofactor. The cofactor is [3Fe-4S] cluster.

The protein resides in the cell membrane. It catalyses the reaction H2 + A = AH2. This enzyme recycles the H(2) produced by nitrogenase to increase the production of ATP and to protect nitrogenase against inhibition or damage by O(2) under carbon- or phosphate-limited conditions. In Rhodobacter capsulatus (Rhodopseudomonas capsulata), this protein is Uptake hydrogenase small subunit (hupA).